We begin with the raw amino-acid sequence, 297 residues long: MKLTHSFIKQQARLGLNFFRYLLARMNHDRVNVNAGYLAYITLLSMVPMLTVLLSILSSFALFANAGEVIQDFVITHFVPAAGEVVKTALIEFVANTGKMTAVGGAFLFVAAIMLISNIDKNLNYIWRVQQKRRAVFSFSMYWMILTLGPILVGASIAATSYITSLKILDNEALSGVYNLFLRWLPFVLSYCAFVGLYLLVPNKKVHWQHAMLGALIAAILFELSKKGFAAYITQFPSYQLIYGALAAIPILFVWVYLCWLIVLVGAEVTAALGEREHWSDSQDMLHFAPLPKNEKE.

6 consecutive transmembrane segments (helical) span residues 43–63, 100–120, 135–155, 181–201, 213–233, and 245–265; these read LLSM…FALF, MTAV…SNID, AVFS…LVGA, FLRW…YLLV, LGAL…AAYI, and ALAA…IVLV.

It belongs to the UPF0761 family.

It localises to the cell inner membrane. This chain is UPF0761 membrane protein VC0395_A2314/VC395_2854, found in Vibrio cholerae serotype O1 (strain ATCC 39541 / Classical Ogawa 395 / O395).